Reading from the N-terminus, the 210-residue chain is Ribosomal RNA small subunit methyltransferase G (210 aa).

Residues G76, M81, 127–128 (VE), and R145 each bind S-adenosyl-L-methionine.

Belongs to the methyltransferase superfamily. RNA methyltransferase RsmG family.

Its subcellular location is the cytoplasm. The enzyme catalyses guanosine(527) in 16S rRNA + S-adenosyl-L-methionine = N(7)-methylguanosine(527) in 16S rRNA + S-adenosyl-L-homocysteine. Specifically methylates the N7 position of guanine in position 527 of 16S rRNA. This is Ribosomal RNA small subunit methyltransferase G from Acinetobacter baumannii (strain SDF).